A 248-amino-acid chain; its full sequence is Probable transcriptional regulatory protein Mnod_7401 (248 aa).

The protein belongs to the TACO1 family.

It localises to the cytoplasm. This Methylobacterium nodulans (strain LMG 21967 / CNCM I-2342 / ORS 2060) protein is Probable transcriptional regulatory protein Mnod_7401.